A 413-amino-acid polypeptide reads, in one-letter code: L-cysteine:1D-myo-inositol 2-amino-2-deoxy-alpha-D-glucopyranoside ligase (413 aa).

The interval 1 to 21 (MQSWSDTALPSVPGQGPPLRL) is disordered. C43 contributes to the Zn(2+) binding site. Residues 43 to 46 (CGIT), T58, and 81 to 83 (NVT) contribute to the L-cysteinyl-5'-AMP site. Residues 45–55 (ITPYDATHLGH) carry the 'HIGH' region motif. The short motif at 187–192 (ERGGDP) is the 'ERGGDP' region element. W227 contributes to the L-cysteinyl-5'-AMP binding site. A Zn(2+)-binding site is contributed by C231. 249 to 251 (GSD) provides a ligand contact to L-cysteinyl-5'-AMP. Position 256 (H256) interacts with Zn(2+). I283 lines the L-cysteinyl-5'-AMP pocket. The short motif at 289–293 (KMSKS) is the 'KMSKS' region element.

This sequence belongs to the class-I aminoacyl-tRNA synthetase family. MshC subfamily. As to quaternary structure, monomer. Requires Zn(2+) as cofactor.

It carries out the reaction 1D-myo-inositol 2-amino-2-deoxy-alpha-D-glucopyranoside + L-cysteine + ATP = 1D-myo-inositol 2-(L-cysteinylamino)-2-deoxy-alpha-D-glucopyranoside + AMP + diphosphate + H(+). In terms of biological role, catalyzes the ATP-dependent condensation of GlcN-Ins and L-cysteine to form L-Cys-GlcN-Ins. In Rhodococcus erythropolis (strain PR4 / NBRC 100887), this protein is L-cysteine:1D-myo-inositol 2-amino-2-deoxy-alpha-D-glucopyranoside ligase.